The primary structure comprises 298 residues: Lactose transport system permease protein LacF (298 aa).

Transmembrane regions (helical) follow at residues 17 to 37 (GWLF…YPIL), 77 to 97 (VIFF…LAAM), 112 to 132 (MIFL…KSMF), 151 to 171 (PIGW…AITW), 208 to 228 (AFLT…TSTI), and 269 to 289 (FSYA…LSFL). In terms of domain architecture, ABC transmembrane type-1 spans 73-290 (LQNTVIFFVV…LMVAVLSFLQ (218 aa)).

It belongs to the binding-protein-dependent transport system permease family. MalFG subfamily.

The protein resides in the cell inner membrane. Its function is as follows. Part of the binding-protein-dependent transport system for lactose. Probably responsible for the translocation of the substrate across the membrane. This chain is Lactose transport system permease protein LacF (lacF), found in Rhizobium radiobacter (Agrobacterium tumefaciens).